Here is a 615-residue protein sequence, read N- to C-terminus: UvrABC system protein C (615 aa).

The 78-residue stretch at 14 to 91 folds into the GIY-YIG domain; that stretch reads TSPGCYIHKD…IKENKPKYNI (78 aa). A UVR domain is found at 196–231; it reads NKIIDELKGKMAAAAQTMEFERAAEYRDLIQAIGTL.

It belongs to the UvrC family. In terms of assembly, interacts with UvrB in an incision complex.

It localises to the cytoplasm. Functionally, the UvrABC repair system catalyzes the recognition and processing of DNA lesions. UvrC both incises the 5' and 3' sides of the lesion. The N-terminal half is responsible for the 3' incision and the C-terminal half is responsible for the 5' incision. In Streptococcus pneumoniae serotype 19F (strain G54), this protein is UvrABC system protein C.